A 50-amino-acid chain; its full sequence is Large ribosomal subunit protein eL39 (50 aa).

It belongs to the eukaryotic ribosomal protein eL39 family. In terms of assembly, part of the 50S ribosomal subunit. Interacts weakly with protein L23.

Binds to the 23S rRNA. Forms part of the polypeptide exit tunnel. The sequence is that of Large ribosomal subunit protein eL39 (rpl39e) from Haloarcula marismortui (strain ATCC 43049 / DSM 3752 / JCM 8966 / VKM B-1809) (Halobacterium marismortui).